The primary structure comprises 563 residues: Arginine--tRNA ligase (563 aa).

Positions 121–131 match the 'HIGH' region motif; the sequence is PNIAKPFSIGH.

It belongs to the class-I aminoacyl-tRNA synthetase family. In terms of assembly, monomer.

The protein localises to the cytoplasm. It catalyses the reaction tRNA(Arg) + L-arginine + ATP = L-arginyl-tRNA(Arg) + AMP + diphosphate. This is Arginine--tRNA ligase from Streptococcus pneumoniae (strain ATCC BAA-255 / R6).